Consider the following 225-residue polypeptide: Thymidylate kinase (225 aa).

ATP is bound at residue 9–16 (GIEGCGKT).

The protein belongs to the thymidylate kinase family.

The catalysed reaction is dTMP + ATP = dTDP + ADP. Functionally, phosphorylation of dTMP to form dTDP in both de novo and salvage pathways of dTTP synthesis. This chain is Thymidylate kinase, found in Geobacter sp. (strain M21).